The sequence spans 360 residues: Mannonate dehydratase (360 aa).

This sequence belongs to the mannonate dehydratase family. It depends on Fe(2+) as a cofactor. The cofactor is Mn(2+).

The enzyme catalyses D-mannonate = 2-dehydro-3-deoxy-D-gluconate + H2O. Its pathway is carbohydrate metabolism; pentose and glucuronate interconversion. Functionally, catalyzes the dehydration of D-mannonate. The protein is Mannonate dehydratase (uxuA) of Thermotoga neapolitana.